A 318-amino-acid polypeptide reads, in one-letter code: NADH-ubiquinone oxidoreductase chain 1 (318 aa).

8 helical membrane passes run 3-23, 69-89, 98-118, 135-155, 171-191, 217-237, 253-273, and 294-314; these read TMNL…LTLV, ILYI…WTPL, FNLG…SILW, AVAQ…SILL, HLWL…STLA, AGPF…MNAL, ELFT…FLWI, and LPLT…ISSI.

Belongs to the complex I subunit 1 family. Core subunit of respiratory chain NADH dehydrogenase (Complex I) which is composed of 45 different subunits.

It is found in the mitochondrion inner membrane. It catalyses the reaction a ubiquinone + NADH + 5 H(+)(in) = a ubiquinol + NAD(+) + 4 H(+)(out). Its function is as follows. Core subunit of the mitochondrial membrane respiratory chain NADH dehydrogenase (Complex I) which catalyzes electron transfer from NADH through the respiratory chain, using ubiquinone as an electron acceptor. Essential for the catalytic activity and assembly of complex I. The protein is NADH-ubiquinone oxidoreductase chain 1 (MT-ND1) of Papio hamadryas (Hamadryas baboon).